Reading from the N-terminus, the 66-residue chain is Alpha-conotoxin Vc1a (66 aa).

The first 25 residues, 1–25 (MGMRMMFTVFLLVVLATTVVSSTSG), serve as a signal peptide directing secretion. Positions 26–47 (RREFRGRNAAAKASDLVSLTDK) are excised as a propeptide. Intrachain disulfides connect Cys-51/Cys-57 and Cys-52/Cys-65. Residues 53–55 (SDP) are ser-Xaa-Pro motif, crucial for potent interaction with nAChR. Key region for inhibition of alpha-9-alpha-10/CHRNA9-CHRNA10 nAChR regions lie at residues 54-56 (DPR) and 60-64 (DHPEI). Pro-55 is subject to 4-hydroxyproline. Glu-63 is subject to 4-carboxyglutamate. At Cys-65 the chain carries Cysteine amide.

It belongs to the conotoxin A superfamily. Post-translationally, vc1.1 is described as having no post-translational modifications (except C-terminal amidation), whereas Vc1a contains a hydroxyproline at Pro-55 and a 4-carboxyglutamate at Glu-63 (and a C-terminal amidation). In terms of processing, hydroxylation of Pro-55 is not important for inhibition of alpha-9-alpha-10/CHRNA9-CHRNA10 nAChRs, since [P6O]Vc1.1 (Pro-55 hydroxylated) shows similar inhibition than native toxin (IC(50)=99.1 nM). In contrast, hydroxylation of Pro-55 seems to impair inhibition of HVA calcium channel currents, since [P6O]Vc1.1 has no effect on HVA calcium channel currents. In vivo, hydroxylation of Pro-55 seems to induce the loss of analgesic effects in rat models of neuropathic pain, since [P6O]Vc1.1 has no effect on mechanical allodynia. Gamma-carboxylation of Glu-63 is not important for inhibition of alpha-9-alpha-10/CHRNA9-CHRNA10 nAChRs, since [E14gamma]Vc1.1 (carboxyglutamate at Glu-63) shows similar inhibition than native toxin (IC(50)=65.3 nM). In contrast, gamma-carboxylation of Glu-63 seems to impair inhibition of HVA calcium channel currents, since [E14gamma]Vc1.1 has no effect on HVA calcium channel currents. Post-translationally, non-native isomers 'ribbon' (with disulfide connectivity C1-C4; C2-C3) and 'beads' (with disulfide connectivity C1-C2; C3-C4) of Vc1.1 also inhibit HVA calcium channel currents in rat DRG neurons (20-30% inhibition at 1 uM toxin). It has been shown that both reduced and alkylated Vc1.1 have no effect on HVA calcium channel currents. The observed activity can be attributed to specific isomers. In terms of processing, [C3S]Vc1.1(1-8) mutant is C-terminally amidated. Expressed by the venom duct.

It is found in the secreted. Alpha-conotoxins act on postsynaptic membranes, they bind to the nicotinic acetylcholine receptors (nAChR) and thus inhibit them. This toxin (native toxin Vc1a; hydroxylated and gamma-carboxylated) blocks alpha-9-alpha-10/CHRNA9-CHRNA10 nAChRs (IC(50)=62.9 nM). In contrast to the non-post-translationally modified analog Vc1.1, Vc1a does not inhibit high voltage-activated (HVA) calcium channel currents. In vivo, in contrast to Vc1.1, Vc1a does not show analgesic effects in rat models of neuropathic pain. In terms of biological role, the synthetic peptide Vc1.1 (a non-hydroxylated and non-gamma-carboxylated analog of Vc1a) has two types of targets. It blocks alpha-9-alpha-10/CHRNA9-CHRNA10 nAChRs (on rat receptors, IC(50)=19-109 nM) (with preference for rat over human receptors) and inhibits high voltage-activated (HVA) calcium channel (Cav2.2, Cav2.3) currents by acting on GABA(B) receptors (GABBR1 and GABBR2) (IC(50)=1.7 nM). It also shows moderate inhibition on alpha-6/alpha-3-beta-2-beta-3 (CHRNA6/CHRNA3-CHRNB2-CHRNB3) (IC(50)=140 nM) and alpha-6/alpha-3-beta-4 (CHRNA6/CHRNA3-CHRNB4) (IC(50)=980 nM). On alpha-9-alpha-10/CHRNA9-CHRNA10 nAChR, it most likely interacts with the alpha-10(+)/alpha-9(-)interface of the receptor. In vivo, it acts as a powerful analgesic in rat models of neuropathic pain. The sequence is that of Alpha-conotoxin Vc1a from Conus victoriae (Queen Victoria cone).